A 500-amino-acid polypeptide reads, in one-letter code: Protein nucleotidyltransferase YdiU (500 aa).

8 residues coordinate ATP: glycine 96, glycine 98, arginine 99, lysine 119, aspartate 131, glycine 132, arginine 182, and arginine 189. Residue aspartate 258 is the Proton acceptor of the active site. Mg(2+) is bound by residues asparagine 259 and aspartate 268. Aspartate 268 is an ATP binding site.

This sequence belongs to the SELO family. Mg(2+) is required as a cofactor. Mn(2+) serves as cofactor.

It catalyses the reaction L-seryl-[protein] + ATP = 3-O-(5'-adenylyl)-L-seryl-[protein] + diphosphate. It carries out the reaction L-threonyl-[protein] + ATP = 3-O-(5'-adenylyl)-L-threonyl-[protein] + diphosphate. The enzyme catalyses L-tyrosyl-[protein] + ATP = O-(5'-adenylyl)-L-tyrosyl-[protein] + diphosphate. The catalysed reaction is L-histidyl-[protein] + UTP = N(tele)-(5'-uridylyl)-L-histidyl-[protein] + diphosphate. It catalyses the reaction L-seryl-[protein] + UTP = O-(5'-uridylyl)-L-seryl-[protein] + diphosphate. It carries out the reaction L-tyrosyl-[protein] + UTP = O-(5'-uridylyl)-L-tyrosyl-[protein] + diphosphate. Nucleotidyltransferase involved in the post-translational modification of proteins. It can catalyze the addition of adenosine monophosphate (AMP) or uridine monophosphate (UMP) to a protein, resulting in modifications known as AMPylation and UMPylation. The sequence is that of Protein nucleotidyltransferase YdiU from Rhizobium etli (strain CIAT 652).